The primary structure comprises 886 residues: Conserved oligomeric Golgi complex subunit 1 (886 aa).

The span at 834–846 (SAERKSPIQEPVE) shows a compositional bias: basic and acidic residues. Residues 834-886 (SAERKSPIQEPVEKTATTTPTRKSGGNGARKGDSSKSKSSAASFFGMSQEWFR) are disordered. S839 carries the post-translational modification Phosphoserine. The segment covering 848–857 (TATTTPTRKS) has biased composition (polar residues).

The protein belongs to the COG1 family. As to quaternary structure, component of the conserved oligomeric Golgi complex which is composed of eight different subunits and is required for normal Golgi morphology and localization.

Its subcellular location is the golgi apparatus membrane. Required for normal Golgi function. The polypeptide is Conserved oligomeric Golgi complex subunit 1 (Drosophila melanogaster (Fruit fly)).